A 471-amino-acid polypeptide reads, in one-letter code: V-type ATP synthase beta chain (471 aa).

It belongs to the ATPase alpha/beta chains family.

Its function is as follows. Produces ATP from ADP in the presence of a proton gradient across the membrane. The V-type beta chain is a regulatory subunit. The sequence is that of V-type ATP synthase beta chain from Deinococcus deserti (strain DSM 17065 / CIP 109153 / LMG 22923 / VCD115).